Reading from the N-terminus, the 522-residue chain is Cell polarity protein mod5 (522 aa).

5 disordered regions span residues 1 to 83 (MSAL…PDGD), 119 to 158 (KRSA…FNSN), 170 to 192 (RRIL…TKSA), 251 to 285 (PLQP…SPVP), and 300 to 516 (YSPS…KLEK). Polar residues-rich tracts occupy residues 27 to 46 (PNTT…SAPS), 66 to 76 (LPSSKQDTGSS), and 131 to 146 (NGST…SPSE). S43 is subject to Phosphoserine. The span at 258 to 285 (PANETPASSSSSAKARPVSVPDMSSPVP) shows a compositional bias: low complexity. Phosphoserine is present on S303. Positions 308–318 (KVAETDSESRK) are enriched in basic and acidic residues. The segment covering 335–349 (GAQTQSTPNRISRSD) has biased composition (polar residues). At S350 the chain carries Phosphoserine. Composition is skewed to polar residues over residues 363-396 (NAST…TSTN) and 404-431 (DIPQ…TPQV). The segment covering 439-452 (SRSSPLPSASVPAL) has biased composition (low complexity). Composition is skewed to basic and acidic residues over residues 472–482 (HESEMPPHVTR) and 495–516 (PKEK…KLEK).

In terms of assembly, interacts with tea1 and tea3.

Its subcellular location is the cell membrane. Its function is as follows. With tea1, acts in a positive-feedback loop in the microtubule-mediated regulation of cell polarity. Involved in the anchoring of tea1 at the cortex as well as the correct localization of tea3. The protein is Cell polarity protein mod5 (mod5) of Schizosaccharomyces pombe (strain 972 / ATCC 24843) (Fission yeast).